We begin with the raw amino-acid sequence, 204 residues long: UPF0637 protein SaurJH9_1166 (204 aa).

It belongs to the UPF0637 family.

In Staphylococcus aureus (strain JH9), this protein is UPF0637 protein SaurJH9_1166.